Here is a 323-residue protein sequence, read N- to C-terminus: tRNA-dihydrouridine(20/20a) synthase (323 aa).

FMN-binding positions include 14 to 16 (PML) and Q66. C96 serves as the catalytic Proton donor. FMN-binding positions include K135, H166, 206–208 (NGG), and 228–229 (GR).

Belongs to the Dus family. DusA subfamily. Requires FMN as cofactor.

The enzyme catalyses 5,6-dihydrouridine(20) in tRNA + NADP(+) = uridine(20) in tRNA + NADPH + H(+). The catalysed reaction is 5,6-dihydrouridine(20) in tRNA + NAD(+) = uridine(20) in tRNA + NADH + H(+). It catalyses the reaction 5,6-dihydrouridine(20a) in tRNA + NADP(+) = uridine(20a) in tRNA + NADPH + H(+). It carries out the reaction 5,6-dihydrouridine(20a) in tRNA + NAD(+) = uridine(20a) in tRNA + NADH + H(+). In terms of biological role, catalyzes the synthesis of 5,6-dihydrouridine (D), a modified base found in the D-loop of most tRNAs, via the reduction of the C5-C6 double bond in target uridines. Specifically modifies U20 and U20a in tRNAs. In Haemophilus ducreyi (strain 35000HP / ATCC 700724), this protein is tRNA-dihydrouridine(20/20a) synthase.